The following is a 374-amino-acid chain: Proteinase-activated receptor 3 (374 aa).

Positions 1–21 (MKALIFAAAGLLLLLPTFCQS) are cleaved as a signal peptide. Residues 22–38 (GMENDTNNLAKPTLPIK) constitute a propeptide, removed for receptor activation. Asn25 and Asn82 each carry an N-linked (GlcNAc...) asparagine glycan. The Extracellular portion of the chain corresponds to 39 to 94 (TFRGAPPNSFEEFPFSALEGWTGATITVKIKCPEESASHLHVKNATMGYLTSSLST). Residues 95–120 (KLIPAIYLLVFVVGVPANAVTLWMLF) traverse the membrane as a helical segment. At 121 to 128 (FRTRSICT) the chain is on the cytoplasmic side. Residues 129–148 (TVFYTNLAIADFLFCVTLPF) form a helical membrane-spanning segment. Over 149-167 (KIAYHLNGNNWVFGEVLCR) the chain is Extracellular. Residues Cys166 and Cys245 are joined by a disulfide bond. Residues 168–189 (ATTVIFYGNMYCSILLLACISI) form a helical membrane-spanning segment. Topologically, residues 190-206 (NRYLAIVHPFTYRGLPK) are cytoplasmic. A helical transmembrane segment spans residues 207-230 (HTYALVTCGLVWATVFLYMLPFFI). Residues 231-260 (LKQEYYLVQPDITTCHDVHNTCESSSPFQL) are Extracellular-facing. Residues 261-280 (YYFISLAFFGFLIPFVLIIY) traverse the membrane as a helical segment. Residues 281 to 297 (CYAAIIRTLNAYDHRWL) are Cytoplasmic-facing. The helical transmembrane segment at 298–322 (WYVKASLLILVIFTICFAPSNIILI) threads the bilayer. Residues 323-336 (IHHANYYYNNTDGL) are Extracellular-facing. The N-linked (GlcNAc...) asparagine glycan is linked to Asn331. Residues 337–361 (YFIYLIALCLGSLNSCLDPFLYFLM) traverse the membrane as a helical segment. Topologically, residues 362–374 (SKTRNHSTAYLTK) are cytoplasmic.

It belongs to the G-protein coupled receptor 1 family. In terms of assembly, interacts with INSC/inscuteable and probably GPSM2. A proteolytic cleavage generates a new N-terminus that functions as a tethered ligand. Highest expression in the megakaryocytes of the bone marrow, lower in mature megakaryocytes, in platelets and in a variety of other tissues such as heart and gut.

It is found in the cell membrane. Receptor for activated thrombin coupled to G proteins that stimulate phosphoinositide hydrolysis. This Homo sapiens (Human) protein is Proteinase-activated receptor 3 (F2RL2).